Reading from the N-terminus, the 169-residue chain is Phosphopantetheine adenylyltransferase (169 aa).

Thr14 lines the substrate pocket. ATP is bound by residues 14–15 and His22; that span reads TF. Substrate is bound by residues Lys46, Leu78, and Arg92. Residues 93–95, Glu103, and 128–134 contribute to the ATP site; these read GLR and HSFISSS.

The protein belongs to the bacterial CoaD family. As to quaternary structure, homohexamer. Requires Mg(2+) as cofactor.

Its subcellular location is the cytoplasm. It carries out the reaction (R)-4'-phosphopantetheine + ATP + H(+) = 3'-dephospho-CoA + diphosphate. It participates in cofactor biosynthesis; coenzyme A biosynthesis; CoA from (R)-pantothenate: step 4/5. Functionally, reversibly transfers an adenylyl group from ATP to 4'-phosphopantetheine, yielding dephospho-CoA (dPCoA) and pyrophosphate. The protein is Phosphopantetheine adenylyltransferase of Stenotrophomonas maltophilia (strain K279a).